Reading from the N-terminus, the 508-residue chain is UTP--glucose-1-phosphate uridylyltransferase (508 aa).

Ser13 bears the Phosphoserine mark. UTP-binding positions include 113 to 116 (LNGG), Lys127, Gln190, and Gly222. 115-116 (GG) lines the substrate pocket. Position 127 (Lys127) interacts with Mg(2+). Substrate contacts are provided by residues His223 and 251–253 (NID). Positions 253 and 396 each coordinate UTP. A Mg(2+)-binding site is contributed by Asp253. Lys396 is an active-site residue. Thr426 is subject to Phosphothreonine. Position 434 is a phosphoserine (Ser434). The residue at position 438 (Lys438) is an N6-acetyllysine. Ser448 and Ser461 each carry phosphoserine. Residues 457–508 (HLTVSGDVTFGKNVSLKGTVIIIXNHGDRIDIPPGAVLENKIVSGNLRILDH) form an oligomerization region. The interval 502–503 (NL) is critical for end-to-end subunit interaction.

Belongs to the UDPGP type 1 family. Homooctamer.

The protein localises to the cytoplasm. The catalysed reaction is alpha-D-glucose 1-phosphate + UTP + H(+) = UDP-alpha-D-glucose + diphosphate. Its pathway is glycan biosynthesis; glycogen biosynthesis. Its function is as follows. UTP--glucose-1-phosphate uridylyltransferase catalyzing the conversion of glucose-1-phosphate into UDP-glucose, a crucial precursor for the production of glycogen. This is UTP--glucose-1-phosphate uridylyltransferase (UGP2) from Sus scrofa (Pig).